The following is a 266-amino-acid chain: Hydroxyethylthiazole kinase (266 aa).

Methionine 41 serves as a coordination point for substrate. Residues arginine 117 and serine 163 each coordinate ATP. Alanine 190 contacts substrate.

The protein belongs to the Thz kinase family. Mg(2+) serves as cofactor.

The catalysed reaction is 5-(2-hydroxyethyl)-4-methylthiazole + ATP = 4-methyl-5-(2-phosphooxyethyl)-thiazole + ADP + H(+). The protein operates within cofactor biosynthesis; thiamine diphosphate biosynthesis; 4-methyl-5-(2-phosphoethyl)-thiazole from 5-(2-hydroxyethyl)-4-methylthiazole: step 1/1. Its function is as follows. Catalyzes the phosphorylation of the hydroxyl group of 4-methyl-5-beta-hydroxyethylthiazole (THZ). This is Hydroxyethylthiazole kinase from Histophilus somni (strain 129Pt) (Haemophilus somnus).